The chain runs to 1092 residues: DNA polymerase delta catalytic subunit (1092 aa).

The tract at residues 1–71 is disordered; it reads MDGKRKFNGT…SRPPPPELDP (71 aa). The short motif at 4 to 19 is the Nuclear localization signal element; sequence KRKFNGTSNGHAKKPR. 4 residues coordinate Zn(2+): Cys-997, Cys-1000, Cys-1014, and Cys-1017. Residues 997–1017 form a CysA-type zinc finger; the sequence is CLGCKSLMPKGYEQACLCPHC. Cys-1046, Cys-1049, Cys-1059, and Cys-1064 together coordinate [4Fe-4S] cluster. A CysB motif motif is present at residues 1046 to 1064; sequence CQRCQESLHEEVICSNRDC.

This sequence belongs to the DNA polymerase type-B family. In terms of assembly, catalytic component of the DNA polymerase delta complex consisting of three subunits: the catalytic subunit PolD1 and two accessory subunits PolD2/Pol31 and PolD3/Pol32. Within the delta complex, interacts with both PolD2 and PolD3, and is able to interact with PolD2 in the absence of PolD3. Interacts with PCNA and PCNA2. The cofactor is [4Fe-4S] cluster. Mg(2+) serves as cofactor. As to expression, expressed in ovaries (at the protein level). Expressed in embryos (at the protein level).

It is found in the nucleus. The protein resides in the nucleoplasm. The catalysed reaction is DNA(n) + a 2'-deoxyribonucleoside 5'-triphosphate = DNA(n+1) + diphosphate. Its activity is regulated as follows. Inhibited by KCL. Also inhibited by carbonyldiphosphonate, aphidicolin and N-ethylmaleimide (NEM). Functionally, as the catalytic component of the DNA polymerase delta complex, plays a crucial role in high fidelity genome replication, including lagging strand synthesis, DNA recombination and repair. Exhibits both DNA polymerase and 3'- to 5'-exonuclease activities. Required at the nucleus of rapidly dividing embryonic cells to activate genome replication during the earliest cell cycles. Likely to require the presence of accessory proteins PolD2 and PolD3 for full activity. The sequence is that of DNA polymerase delta catalytic subunit from Drosophila melanogaster (Fruit fly).